Here is a 680-residue protein sequence, read N- to C-terminus: DNA-directed RNA polymerase subunit beta' (680 aa).

Residues C69, C71, C87, and C90 each contribute to the Zn(2+) site. Mg(2+) contacts are provided by D489, D491, and D493.

It belongs to the RNA polymerase beta' chain family. RpoC1 subfamily. As to quaternary structure, in plastids the minimal PEP RNA polymerase catalytic core is composed of four subunits: alpha, beta, beta', and beta''. When a (nuclear-encoded) sigma factor is associated with the core the holoenzyme is formed, which can initiate transcription. Mg(2+) is required as a cofactor. Zn(2+) serves as cofactor.

Its subcellular location is the plastid. It is found in the chloroplast. The enzyme catalyses RNA(n) + a ribonucleoside 5'-triphosphate = RNA(n+1) + diphosphate. In terms of biological role, DNA-dependent RNA polymerase catalyzes the transcription of DNA into RNA using the four ribonucleoside triphosphates as substrates. The sequence is that of DNA-directed RNA polymerase subunit beta' from Ceratophyllum demersum (Rigid hornwort).